Consider the following 594-residue polypeptide: uncharacterized protein (594 aa).

A DNA-binding region (zn(2)-C6 fungal-type) is located at residues 11–38; it reads CELCRRKKIRCNRELPSCQNCIVYQEEC. A helical transmembrane segment spans residues 503–523; that stretch reads YLWVFLYCPFTPFLVLFSNIV.

The protein resides in the nucleus. The protein localises to the membrane. This is an uncharacterized protein from Schizosaccharomyces pombe (strain 972 / ATCC 24843) (Fission yeast).